The primary structure comprises 330 residues: Ketol-acid reductoisomerase (NADP(+)) (330 aa).

Residues 1–181 form the KARI N-terminal Rossmann domain; the sequence is MNVYYEQDAD…GGAKAGVIET (181 aa). NADP(+)-binding positions include 24-27, Arg-47, Ser-50, Ser-52, and 82-85; these read YGSQ and DQYQ. Residue His-107 is part of the active site. Gly-133 is an NADP(+) binding site. Residues 182 to 327 enclose the KARI C-terminal knotted domain; sequence TIKDETETDL…AKLRNMMSWL (146 aa). Positions 190, 194, 226, and 230 each coordinate Mg(2+). Residue Ser-251 coordinates substrate.

This sequence belongs to the ketol-acid reductoisomerase family. The cofactor is Mg(2+).

The enzyme catalyses (2R)-2,3-dihydroxy-3-methylbutanoate + NADP(+) = (2S)-2-acetolactate + NADPH + H(+). It catalyses the reaction (2R,3R)-2,3-dihydroxy-3-methylpentanoate + NADP(+) = (S)-2-ethyl-2-hydroxy-3-oxobutanoate + NADPH + H(+). It participates in amino-acid biosynthesis; L-isoleucine biosynthesis; L-isoleucine from 2-oxobutanoate: step 2/4. Its pathway is amino-acid biosynthesis; L-valine biosynthesis; L-valine from pyruvate: step 2/4. Functionally, involved in the biosynthesis of branched-chain amino acids (BCAA). Catalyzes an alkyl-migration followed by a ketol-acid reduction of (S)-2-acetolactate (S2AL) to yield (R)-2,3-dihydroxy-isovalerate. In the isomerase reaction, S2AL is rearranged via a Mg-dependent methyl migration to produce 3-hydroxy-3-methyl-2-ketobutyrate (HMKB). In the reductase reaction, this 2-ketoacid undergoes a metal-dependent reduction by NADPH to yield (R)-2,3-dihydroxy-isovalerate. The chain is Ketol-acid reductoisomerase (NADP(+)) from Prosthecochloris aestuarii (strain DSM 271 / SK 413).